The primary structure comprises 262 residues: TLC domain-containing protein 4-B (262 aa).

6 helical membrane passes run 6-26 (PLTVFISVTSLAVFQFLFHVG), 53-73 (TVSSFHALVVGCFCLYILVYD), 90-110 (LNVAVTSGYLISDLLLIIYYW), 122-142 (HLAALYACYYVLGEGMLPYFG), 177-197 (GVLMTISFFIVRIAVIPIYYG), and 218-238 (AWIISSVSLDIMNVMWMIKIA). The TLC domain occupies 44–246 (RQKIEWNSRT…IAKGCYKVLY (203 aa)).

Belongs to the TLCD4 family.

It localises to the membrane. This chain is TLC domain-containing protein 4-B (tlcd4-b), found in Xenopus laevis (African clawed frog).